The chain runs to 336 residues: 3-isopropylmalate dehydrogenase (336 aa).

Substrate-binding residues include Arg-87, Arg-97, Arg-121, and Asp-211. Residues Asp-211, Asp-235, and Asp-239 each contribute to the Mg(2+) site. An NAD(+)-binding site is contributed by 271-283 (GSAPDIAGQGIAD).

It belongs to the isocitrate and isopropylmalate dehydrogenases family. LeuB type 2 subfamily. In terms of assembly, homodimer. The cofactor is Mg(2+). Mn(2+) serves as cofactor.

The protein localises to the cytoplasm. The catalysed reaction is (2R,3S)-3-isopropylmalate + NAD(+) = 4-methyl-2-oxopentanoate + CO2 + NADH. Its pathway is amino-acid biosynthesis; L-leucine biosynthesis; L-leucine from 3-methyl-2-oxobutanoate: step 3/4. Catalyzes the oxidation of 3-carboxy-2-hydroxy-4-methylpentanoate (3-isopropylmalate) to 3-carboxy-4-methyl-2-oxopentanoate. The product decarboxylates to 4-methyl-2 oxopentanoate. This Mycobacterium bovis (strain ATCC BAA-935 / AF2122/97) protein is 3-isopropylmalate dehydrogenase.